Reading from the N-terminus, the 306-residue chain is Myb family transcription factor MOF1 (306 aa).

Residues R19 to L79 enclose the HTH myb-type domain. The segment at residues P50–R75 is a DNA-binding region (H-T-H motif).

Interacts with TPR1, TPR2 and TPR3. In terms of tissue distribution, expressed in roots, leaves, leaf sheaths, culms, panicles, lemmas, paleas, lodicules, stamens, and pistils.

Its subcellular location is the nucleus. Its function is as follows. Transcriptional repressor that plays a role in the regulation of organ identity and spikelet meristem determinacy. Interacts with the TPR corepressors to possibly repress the expression of downstream target genes. The polypeptide is Myb family transcription factor MOF1 (Oryza sativa subsp. japonica (Rice)).